Reading from the N-terminus, the 265-residue chain is MSDILNTILARKADEVAERSARVPLAELIARSADLPLTRGFAAAMQASIAAGDPAVIAEVKKASPSKGVIRPDFQPADIAVSYEFGGATCLSVLTDVDFFQGSDAYLRQARDACTLPVLRKDFTVDPYQVYEARVLGADCILLIVSALEDAQLADLSGLAMQLGLDVLVEVHDIDELERAVQVPVPLIGINNRNLRTFEVTLQTTLDMRSAVPRDRVLVTESGIVTQADVQRMRSHDVNAFLVGETFMRAAEPGESLRQLFFAHD.

It belongs to the TrpC family.

It catalyses the reaction 1-(2-carboxyphenylamino)-1-deoxy-D-ribulose 5-phosphate + H(+) = (1S,2R)-1-C-(indol-3-yl)glycerol 3-phosphate + CO2 + H2O. Its pathway is amino-acid biosynthesis; L-tryptophan biosynthesis; L-tryptophan from chorismate: step 4/5. The sequence is that of Indole-3-glycerol phosphate synthase from Xanthomonas axonopodis pv. citri (strain 306).